The sequence spans 321 residues: Acetyl-coenzyme A carboxylase carboxyl transferase subunit beta, chloroplastic (321 aa).

Residues 47–321 enclose the CoA carboxyltransferase N-terminal domain; the sequence is LWAQCDNCEN…FWFYVLRSSL (275 aa). Residues C51, C54, C70, and C73 each contribute to the Zn(2+) site. Residues 51-73 form a C4-type zinc finger; that stretch reads CDNCENLLYLRFLRENQSVCKEC.

This sequence belongs to the AccD/PCCB family. As to quaternary structure, acetyl-CoA carboxylase is a heterohexamer composed of biotin carboxyl carrier protein, biotin carboxylase and 2 subunits each of ACCase subunit alpha and ACCase plastid-coded subunit beta (accD). Zn(2+) is required as a cofactor.

The protein localises to the plastid. It localises to the chloroplast stroma. The enzyme catalyses N(6)-carboxybiotinyl-L-lysyl-[protein] + acetyl-CoA = N(6)-biotinyl-L-lysyl-[protein] + malonyl-CoA. It functions in the pathway lipid metabolism; malonyl-CoA biosynthesis; malonyl-CoA from acetyl-CoA: step 1/1. Its function is as follows. Component of the acetyl coenzyme A carboxylase (ACC) complex. Biotin carboxylase (BC) catalyzes the carboxylation of biotin on its carrier protein (BCCP) and then the CO(2) group is transferred by the transcarboxylase to acetyl-CoA to form malonyl-CoA. This is Acetyl-coenzyme A carboxylase carboxyl transferase subunit beta, chloroplastic from Pinus thunbergii (Japanese black pine).